A 282-amino-acid polypeptide reads, in one-letter code: Acetyl-coenzyme A carboxylase carboxyl transferase subunit beta 1 (282 aa).

The CoA carboxyltransferase N-terminal domain occupies 23 to 282 (LMTKCPECRH…MHTKGGVQHV (260 aa)). Residues Cys-27, Cys-30, Cys-46, and Cys-49 each contribute to the Zn(2+) site. Residues 27–49 (CPECRHILLTKELEKNHKVCTKC) form a C4-type zinc finger.

The protein belongs to the AccD/PCCB family. Acetyl-CoA carboxylase is a heterohexamer composed of biotin carboxyl carrier protein (AccB), biotin carboxylase (AccC) and two subunits each of ACCase subunit alpha (AccA) and ACCase subunit beta (AccD). The cofactor is Zn(2+).

The protein localises to the cytoplasm. It catalyses the reaction N(6)-carboxybiotinyl-L-lysyl-[protein] + acetyl-CoA = N(6)-biotinyl-L-lysyl-[protein] + malonyl-CoA. The protein operates within lipid metabolism; malonyl-CoA biosynthesis; malonyl-CoA from acetyl-CoA: step 1/1. In terms of biological role, component of the acetyl coenzyme A carboxylase (ACC) complex. Biotin carboxylase (BC) catalyzes the carboxylation of biotin on its carrier protein (BCCP) and then the CO(2) group is transferred by the transcarboxylase to acetyl-CoA to form malonyl-CoA. The polypeptide is Acetyl-coenzyme A carboxylase carboxyl transferase subunit beta 1 (Lysinibacillus sphaericus (strain C3-41)).